The chain runs to 212 residues: ATP phosphoribosyltransferase (212 aa).

Belongs to the ATP phosphoribosyltransferase family. Short subfamily. As to quaternary structure, heteromultimer composed of HisG and HisZ subunits.

It is found in the cytoplasm. The enzyme catalyses 1-(5-phospho-beta-D-ribosyl)-ATP + diphosphate = 5-phospho-alpha-D-ribose 1-diphosphate + ATP. It participates in amino-acid biosynthesis; L-histidine biosynthesis; L-histidine from 5-phospho-alpha-D-ribose 1-diphosphate: step 1/9. Functionally, catalyzes the condensation of ATP and 5-phosphoribose 1-diphosphate to form N'-(5'-phosphoribosyl)-ATP (PR-ATP). Has a crucial role in the pathway because the rate of histidine biosynthesis seems to be controlled primarily by regulation of HisG enzymatic activity. This Albidiferax ferrireducens (strain ATCC BAA-621 / DSM 15236 / T118) (Rhodoferax ferrireducens) protein is ATP phosphoribosyltransferase.